The chain runs to 123 residues: Histone H1-like protein HC1 (123 aa).

Positions Ile-54 to Lys-123 are disordered. Basic residues predominate over residues Leu-61–Lys-75. Positions Lys-85–Pro-102 are enriched in low complexity. A compositionally biased stretch (basic residues) spans Ala-103–Lys-123.

This sequence belongs to the histone H1/H5 family. HCT subfamily.

Might have a role analogous to that of eukaryotic histone proteins. This chain is Histone H1-like protein HC1 (hctA), found in Chlamydia pneumoniae (Chlamydophila pneumoniae).